Here is a 149-residue protein sequence, read N- to C-terminus: Nucleoside diphosphate kinase (149 aa).

Positions 9, 57, 85, 91, 102, and 112 each coordinate ATP. Catalysis depends on H115, which acts as the Pros-phosphohistidine intermediate.

It belongs to the NDK family. As to quaternary structure, homotetramer. It depends on Mg(2+) as a cofactor.

Its subcellular location is the cytoplasm. It catalyses the reaction a 2'-deoxyribonucleoside 5'-diphosphate + ATP = a 2'-deoxyribonucleoside 5'-triphosphate + ADP. The enzyme catalyses a ribonucleoside 5'-diphosphate + ATP = a ribonucleoside 5'-triphosphate + ADP. In terms of biological role, major role in the synthesis of nucleoside triphosphates other than ATP. The ATP gamma phosphate is transferred to the NDP beta phosphate via a ping-pong mechanism, using a phosphorylated active-site intermediate. The protein is Nucleoside diphosphate kinase of Acaryochloris marina (strain MBIC 11017).